The following is a 130-amino-acid chain: MYRAVTRRIEVTVEPNYLPERSSAENRQYFWSYTVVITNSGEETVKLRTRHWVITDASGRTQEVRGEGVVGEQPVLAPGERFEYTSGVPLPTASGFMAGRYQMETEAGEKFEIDVPPFSLDSPEGKRTLN.

The 125-residue stretch at Arg3–Arg127 folds into the ApaG domain.

In Rhodopseudomonas palustris (strain ATCC BAA-98 / CGA009), this protein is Protein ApaG.